Consider the following 486-residue polypeptide: Siroheme synthase (486 aa).

The tract at residues 1 to 203 (MNYFPIFANL…RQNTLAEREL (203 aa)) is precorrin-2 dehydrogenase /sirohydrochlorin ferrochelatase. Residues 22 to 23 (AV) and 43 to 44 (KH) contribute to the NAD(+) site. Ser128 is modified (phosphoserine). Residues 217 to 486 (GSVSLVGAGP…LGTGQEQQAA (270 aa)) are uroporphyrinogen-III C-methyltransferase. Position 226 (Pro226) interacts with S-adenosyl-L-methionine. The Proton acceptor role is filled by Asp249. The Proton donor role is filled by Lys271. S-adenosyl-L-methionine is bound by residues 302 to 304 (GGD), Val307, 332 to 333 (TA), Met384, and Gly413.

In the N-terminal section; belongs to the precorrin-2 dehydrogenase / sirohydrochlorin ferrochelatase family. This sequence in the C-terminal section; belongs to the precorrin methyltransferase family.

The catalysed reaction is uroporphyrinogen III + 2 S-adenosyl-L-methionine = precorrin-2 + 2 S-adenosyl-L-homocysteine + H(+). It catalyses the reaction precorrin-2 + NAD(+) = sirohydrochlorin + NADH + 2 H(+). It carries out the reaction siroheme + 2 H(+) = sirohydrochlorin + Fe(2+). It participates in cofactor biosynthesis; adenosylcobalamin biosynthesis; precorrin-2 from uroporphyrinogen III: step 1/1. Its pathway is cofactor biosynthesis; adenosylcobalamin biosynthesis; sirohydrochlorin from precorrin-2: step 1/1. It functions in the pathway porphyrin-containing compound metabolism; siroheme biosynthesis; precorrin-2 from uroporphyrinogen III: step 1/1. The protein operates within porphyrin-containing compound metabolism; siroheme biosynthesis; siroheme from sirohydrochlorin: step 1/1. It participates in porphyrin-containing compound metabolism; siroheme biosynthesis; sirohydrochlorin from precorrin-2: step 1/1. Multifunctional enzyme that catalyzes the SAM-dependent methylations of uroporphyrinogen III at position C-2 and C-7 to form precorrin-2 via precorrin-1. Then it catalyzes the NAD-dependent ring dehydrogenation of precorrin-2 to yield sirohydrochlorin. Finally, it catalyzes the ferrochelation of sirohydrochlorin to yield siroheme. The sequence is that of Siroheme synthase from Neisseria meningitidis serogroup A / serotype 4A (strain DSM 15465 / Z2491).